Here is a 639-residue protein sequence, read N- to C-terminus: MEIIRSNFKCNLHKVYQAIEEADFFAIDGEFSGISDGPSVSALTNGFDTPEERYQKLKKHSMDFLLFQFGLCTFKYDYTDSKYITKSFNFYVFPKPFNRSPPDVKFVCQSSSIDFLASQGFDFNKVFRNGIPYLNQEEERQLREQYDEKRSQANGAGALSYVSPNTSKCPVTIPEDQKKFIDQVVEKIEDLLQSEENKNLDLEPCTGFQRKLIYQTLSWKYPKGIHVETLETEKKERYIVISKVDEEERKRREQQKHAKEQEELNDAVGFSRVIHAIANSGKLVIGHNMLLDVMHTVHQFYCPLPADLSEFKEMTTCVFPRLLDTKLMASTQPFKDIINNTSLAELEKRLKETPFSPPKVESAEGFPSYDTASEQLHEAGYDAYITGLCFISMANYLGSFLSPPKIHVSARSKLIEPFFNKLFLMRVMDIPYLNLEGPDLQPKRDHVLHVTFPKEWKTSDLYQLFSAFGNIQISWIDDTSAFVSLSQPEQVKIAVNTSKYAESYRIQTYAEYVGRKQEEKQIKRKWTEDSWKEADSKRLNPQCIPYALQNHYYRNNSFTAPSTVGKRNLSPSQEEAGLEDGVSGEISDTELEQTDSCAEPLSEGRKKAKKLKRMKKELSPAVSISKNSPATLFEVPDTW.

2 residues coordinate a divalent metal cation: Asp-28 and Glu-30. Phosphoserine is present on residues Ser-163 and Ser-167. One can recognise an R3H domain in the interval 178–245 (KKFIDQVVEK…ERYIVISKVD (68 aa)). Lys-220 carries the N6-acetyllysine modification. A divalent metal cation contacts are provided by Asp-292 and Asp-382. Lys-499 bears the N6-acetyllysine mark. At Ser-530 the chain carries Phosphoserine. Residue Ser-557 is modified to Phosphoserine; by MAPKAPK2. The interval 563–611 (TVGKRNLSPSQEEAGLEDGVSGEISDTELEQTDSCAEPLSEGRKKAKKL) is disordered. 5 positions are modified to phosphoserine: Ser-583, Ser-587, Ser-619, Ser-623, and Ser-628. Position 631 is a phosphothreonine (Thr-631).

Belongs to the CAF1 family. As to quaternary structure, homodimer. Found in a mRNA decay complex with RENT1, RENT2 and RENT3B. Interacts with KHSRP. Interacts with CELF1/CUGBP1. Interacts with ZC3HAV1 in an RNA-independent manner. Interacts with DHX36. Mg(2+) is required as a cofactor. In terms of processing, phosphorylation by MAPKAPK2, preventing GADD45A mRNA degradation after genotoxic stress.

It localises to the nucleus. The protein resides in the cytoplasm. Its subcellular location is the nucleolus. It catalyses the reaction Exonucleolytic cleavage of poly(A) to 5'-AMP.. Its function is as follows. 3'-exoribonuclease that has a preference for poly(A) tails of mRNAs, thereby efficiently degrading poly(A) tails. Exonucleolytic degradation of the poly(A) tail is often the first step in the decay of eukaryotic mRNAs and is also used to silence certain maternal mRNAs translationally during oocyte maturation and early embryonic development. Interacts with both the 3'-end poly(A) tail and the 5'-end cap structure during degradation, the interaction with the cap structure being required for an efficient degradation of poly(A) tails. Involved in nonsense-mediated mRNA decay, a critical process of selective degradation of mRNAs that contain premature stop codons. Also involved in degradation of inherently unstable mRNAs that contain AU-rich elements (AREs) in their 3'-UTR, possibly via its interaction with KHSRP. Probably mediates the removal of poly(A) tails of AREs mRNAs, which constitutes the first step of destabilization. Also able to recognize poly(A) tails of microRNAs such as MIR21 and H/ACA box snoRNAs (small nucleolar RNAs) leading to microRNAs degradation or snoRNA increased stability. The polypeptide is Poly(A)-specific ribonuclease PARN (PARN) (Pongo abelii (Sumatran orangutan)).